Here is a 210-residue protein sequence, read N- to C-terminus: Protein GrpE (210 aa).

The disordered stretch occupies residues 191 to 210 (KGGPKPAEAETNSVFDEKDA).

This sequence belongs to the GrpE family. Homodimer.

It localises to the cytoplasm. In terms of biological role, participates actively in the response to hyperosmotic and heat shock by preventing the aggregation of stress-denatured proteins, in association with DnaK and GrpE. It is the nucleotide exchange factor for DnaK and may function as a thermosensor. Unfolded proteins bind initially to DnaJ; upon interaction with the DnaJ-bound protein, DnaK hydrolyzes its bound ATP, resulting in the formation of a stable complex. GrpE releases ADP from DnaK; ATP binding to DnaK triggers the release of the substrate protein, thus completing the reaction cycle. Several rounds of ATP-dependent interactions between DnaJ, DnaK and GrpE are required for fully efficient folding. The chain is Protein GrpE from Rhizobium etli (strain CIAT 652).